A 141-amino-acid polypeptide reads, in one-letter code: SsrA-binding protein (141 aa).

It belongs to the SmpB family.

The protein resides in the cytoplasm. Its function is as follows. Required for rescue of stalled ribosomes mediated by trans-translation. Binds to transfer-messenger RNA (tmRNA), required for stable association of tmRNA with ribosomes. tmRNA and SmpB together mimic tRNA shape, replacing the anticodon stem-loop with SmpB. tmRNA is encoded by the ssrA gene; the 2 termini fold to resemble tRNA(Ala) and it encodes a 'tag peptide', a short internal open reading frame. During trans-translation Ala-aminoacylated tmRNA acts like a tRNA, entering the A-site of stalled ribosomes, displacing the stalled mRNA. The ribosome then switches to translate the ORF on the tmRNA; the nascent peptide is terminated with the 'tag peptide' encoded by the tmRNA and targeted for degradation. The ribosome is freed to recommence translation, which seems to be the essential function of trans-translation. The polypeptide is SsrA-binding protein (Ureaplasma parvum serovar 3 (strain ATCC 27815 / 27 / NCTC 11736)).